A 1959-amino-acid polypeptide reads, in one-letter code: Sodium channel protein type 10 subunit alpha (1959 aa).

Over 1–125 the chain is Cytoplasmic; it reads MEFPIGSVGT…FNLIRRTAIK (125 aa). The segment at 30–53 is disordered; sequence AHGAAKKARAKHGERKGQDEKPRP. The span at 33-43 shows a compositional bias: basic residues; the sequence is AAKKARAKHGE. Positions 44-53 are enriched in basic and acidic residues; it reads RKGQDEKPRP. The stretch at 116 to 404 is one I repeat; that stretch reads FNLIRRTAIK…VTMAYEEQNQ (289 aa). The chain crosses the membrane as a helical span at residues 126 to 149; the sequence is VSVHAWFSIFITITILFNCVCMTQ. The Extracellular portion of the chain corresponds to 150–154; it reads NDLPE. A helical transmembrane segment spans residues 155 to 174; it reads KIEYAFTVIYTFEALIKILA. The Cytoplasmic portion of the chain corresponds to 175-187; that stretch reads RGFCLNEFTYLRD. The helical transmembrane segment at 188–206 threads the bilayer; it reads PWNWLDFSVITLAYVGAAI. Over 207 to 212 the chain is Extracellular; that stretch reads DLRGIS. The helical; Voltage-sensor transmembrane segment at 213 to 232 threads the bilayer; sequence GLRTFRVLRALKTVSVIPGL. Residues 233-248 are Cytoplasmic-facing; the sequence is KVIVGALIHSVRKLAD. Residues 249-272 traverse the membrane as a helical segment; that stretch reads VTILTVFCLSVFALVGLQLFKGNL. At 273–340 the chain is on the extracellular side; it reads KNKCIKRSTD…PDFNYTSFDS (68 aa). Cysteines 276 and 318 form a disulfide. 3 N-linked (GlcNAc...) asparagine glycosylation sites follow: asparagine 288, asparagine 311, and asparagine 334. Positions 341–365 form an intramembrane region, pore-forming; it reads FAWAFLSLFRLMTQDSWERLYQQTL. Residues 366–372 are Extracellular-facing; sequence RASGKMY. Residues 373 to 398 form a helical membrane-spanning segment; that stretch reads MVFFVLVIFLGSFYLVNLILAVVTMA. Residues 399-659 are Cytoplasmic-facing; it reads YEEQNQATIA…KWMKFKMVLF (261 aa). Serine 440, serine 443, serine 466, and serine 478 each carry phosphoserine. 2 disordered regions span residues 442-484 and 510-578; these read HSHN…YNQR and SQDV…ELTT. Residues 475 to 484 are compositionally biased toward polar residues; it reads SPQSDPYNQR. The span at 523–533 shows a compositional bias: basic and acidic residues; it reads GVFHGDHESHR. 2 positions are modified to phosphoserine: serine 612 and serine 615. Residues 647-911 form an II repeat; the sequence is CCPKWMKFKM…EDDGEVNNLQ (265 aa). A helical transmembrane segment spans residues 660–684; the sequence is ELVTDPFAELTITLCIVVNTIFMAM. Topologically, residues 685–695 are extracellular; sequence EHYPMTDAFDA. A helical transmembrane segment spans residues 696–719; the sequence is MLQAGNIVFTVFFTMEMAFKIIAF. Residues 720–727 lie on the Cytoplasmic side of the membrane; the sequence is DPYYYFQK. The chain crosses the membrane as a helical span at residues 728–747; it reads KWNVFDCVIVTVSLLELSIA. Residues 748-753 lie on the Extracellular side of the membrane; that stretch reads KKGSLS. A helical; Voltage-sensor transmembrane segment spans residues 754–773; the sequence is VLRTFRLLRVFKLAKSWPTL. Topologically, residues 774–789 are cytoplasmic; the sequence is NTLIKIIGNSVGALGN. Residues 790 to 810 traverse the membrane as a helical segment; the sequence is LTFILAIIVFIFALVGKQLLG. The Extracellular portion of the chain corresponds to 811–834; sequence EDYGCRKDGTALWNEGQLRWHMCD. Residues 835–855 constitute an intramembrane region (pore-forming); it reads FFHSFLVIFRILCGEWIENMW. Over 856 to 864 the chain is Extracellular; it reads VCMQVSEKS. Cysteine 857 and cysteine 866 are oxidised to a cystine. The chain crosses the membrane as a helical span at residues 865–890; it reads ICLILFLTVMVLGNLVVLNLFIALLL. Residues 891–1149 lie on the Cytoplasmic side of the membrane; it reads NSFSADNLTA…GWQVRKTCYR (259 aa). Positions 1004-1016 are enriched in acidic residues; that stretch reads GESDLDELEEDIE. Disordered stretches follow at residues 1004 to 1034 and 1071 to 1097; these read GESD…QQDQ and ATPQ…PDPE. The III repeat unit spans residues 1142 to 1451; it reads QVRKTCYRIV…KKYYNAMKKL (310 aa). A helical membrane pass occupies residues 1150 to 1173; it reads IVEHSWFESFIIFMILLSSGALAF. The Extracellular segment spans residues 1174–1186; that stretch reads EDNYLEQKPRVKS. The chain crosses the membrane as a helical span at residues 1187 to 1212; the sequence is MLEYTDRVFTFIFVFEMLLKWVAYGF. The Cytoplasmic segment spans residues 1213-1218; sequence KKYFTN. A helical membrane pass occupies residues 1219 to 1240; sequence AWCWLDFLIVNISLTSLIAKIL. Residues 1241 to 1244 are Extracellular-facing; it reads DYSD. A helical; Voltage-sensor transmembrane segment spans residues 1245 to 1266; that stretch reads VASLKALRTLRALRPLRALSRF. Topologically, residues 1267–1285 are cytoplasmic; the sequence is EGMRVVVDALVGAIPSIMN. A helical transmembrane segment spans residues 1286 to 1313; it reads VLLVCLIFWLIFSIMGVNLFAGKFSRCI. Residues 1314–1355 are Extracellular-facing; the sequence is DTSNNPFSVVNSTIVNNKSECRNQNHTGHFFWVNVKVNFDNV. An intramembrane region (pore-forming) is located at residues 1356-1377; sequence AMGYLALLQVATFKGWMDIMYA. Residues 1378–1393 are Extracellular-facing; sequence AVDSREINSQPQWEDN. Residues 1394 to 1420 form a helical membrane-spanning segment; it reads LYMYLYFVVFIIFGGFFTLNLFVGVII. Residues 1421–1473 are Cytoplasmic-facing; that stretch reads DNFNQQKKKLGGQDIFMTEEQKKYYNAMKKLGSKKPQKPIPRPLNKYQGFVFD. The residue at position 1453 (serine 1453) is a Phosphoserine; by PKC. The IV repeat unit spans residues 1460-1759; that stretch reads IPRPLNKYQG…WEKFDPEATQ (300 aa). The helical transmembrane segment at 1474–1497 threads the bilayer; it reads IVTRQAFDIIIMVLICLNMITMMV. The Extracellular portion of the chain corresponds to 1498–1508; sequence ETDGQSEEKTK. A helical membrane pass occupies residues 1509 to 1532; that stretch reads ILGRINQFFVAVFTGECVMKMFAL. Residues 1533 to 1538 are Cytoplasmic-facing; sequence RQYYFT. A helical membrane pass occupies residues 1539–1562; the sequence is NGWNVFDFIVVILSIGSLVFSAIL. Topologically, residues 1563-1574 are extracellular; that stretch reads KSLESYFSPTLF. The chain crosses the membrane as a helical; Voltage-sensor span at residues 1575–1596; the sequence is RVIRLARIGRILRLIRAAKGIR. Residues 1597–1611 lie on the Cytoplasmic side of the membrane; the sequence is TLLFALMMSLPALFN. Residues 1612-1634 form a helical membrane-spanning segment; it reads IGLLLFLVMFIYSIFGMASFANV. Topologically, residues 1635-1648 are extracellular; that stretch reads VEEAGIDDMFNFQT. Residues 1649-1671 constitute an intramembrane region (pore-forming); it reads FGNSMLCLFQITTSAGWDGLLSP. At 1672–1699 the chain is on the extracellular side; that stretch reads ILNTGPPYCDPNLSNNNTSKGNCGSPTV. Residues 1700–1724 traverse the membrane as a helical segment; that stretch reads GIVFFTTYIIISFLIVVNMYIAVIL. Over 1725 to 1959 the chain is Cytoplasmic; that stretch reads ENFNVATEES…SKEGDSPGPQ (235 aa). Positions 1853 to 1882 constitute an IQ domain; that stretch reads EDISATVIQKAYRSYVLQRSLTLSNPLRVP. The segment at 1901 to 1959 is disordered; it reads ANDSGRLPDKSETTSATSFPPSYDSVTRGLSDRVNISTSNSMHNEDEVTSKEGDSPGPQ. Basic and acidic residues predominate over residues 1943–1959; the sequence is HNEDEVTSKEGDSPGPQ.

The protein belongs to the sodium channel (TC 1.A.1.10) family. Nav1.8/SCN10A subfamily. As to quaternary structure, the channel consists of an ion conducting pore forming alpha-subunit regulated by one or more associated auxiliary subunits SCN1B, SCN2B and SCN3B; electrophysiological properties may vary depending on the type of the associated beta subunits. Found in a number of complexes with PRX, DYNLT1 and PDZD2. Interacts with proteins such as FSTL1, PRX, DYNLT1, PDZD2, S100A10 and many others. Interacts with NEDD4 and NEDD4L. Ubiquitinated by NEDD4L; which promotes its endocytosis. In terms of processing, phosphorylation at Ser-1453 by PKC in a highly conserved cytoplasmic loop slows inactivation of the sodium channel and reduces peak sodium currents. Post-translationally, lacks the cysteine which covalently binds the conotoxin GVIIJ. This cysteine (position 816) is speculated in other sodium channel subunits alpha to be implied in covalent binding with the sodium channel subunit beta-2 or beta-4.

The protein localises to the cell membrane. The enzyme catalyses Na(+)(in) = Na(+)(out). In terms of biological role, tetrodotoxin-resistant channel that mediates the voltage-dependent sodium ion permeability of excitable membranes. Assuming opened or closed conformations in response to the voltage difference across the membrane, the protein forms a sodium-selective channel through which sodium ions may pass in accordance with their electrochemical gradient. Plays a role in neuropathic pain mechanisms. The sequence is that of Sodium channel protein type 10 subunit alpha (Scn10a) from Onychomys torridus (Southern grasshopper mouse).